The primary structure comprises 650 residues: ATP-binding cassette sub-family G member 3 (650 aa).

Topologically, residues 1–387 (MASNNDPTVI…KNFKGFPWVT (387 aa)) are cytoplasmic. One can recognise an ABC transporter domain in the interval 37-279 (LSFHNISYQE…FRSAGYNYES (243 aa)). In terms of domain architecture, ABC transmembrane type-2 spans 381–644 (KGFPWVTVIQ…TITYVQLLQV (264 aa)). Residues 388–408 (VIQAIITVILATAVGTAFRVL) traverse the membrane as a helical segment. The Extracellular portion of the chain corresponds to 409 to 420 (KNDCIEVQMRAG). A helical transmembrane segment spans residues 421 to 441 (LLYLLTIFQCITSVSAGELFV). The Cytoplasmic portion of the chain corresponds to 442–469 (IDRVRFLHEHTSGYYRVSSYFFGKLLAE). A helical transmembrane segment spans residues 470–490 (LIPRRLLPSTVFSLITYVIAG). At 491 to 498 (VKMSMKCF) the chain is on the extracellular side. A helical membrane pass occupies residues 499 to 519 (FTMICTIMVLAYSASSLPLSI). Residues 520–527 (GAGENAVA) are Cytoplasmic-facing. A helical transmembrane segment spans residues 528–548 (VPTLLVTIYFVFMLFFSGLSL). Topologically, residues 549 to 623 (YSGSFLPKLS…LSSWGFWENH (75 aa)) are extracellular. The chain crosses the membrane as a helical span at residues 624–644 (LALVCTMIILLTITYVQLLQV). Residues 645-648 (KNIR) are Cytoplasmic-facing.

The protein belongs to the ABC transporter superfamily. ABCG family. Eye pigment precursor importer (TC 3.A.1.204) subfamily. In terms of assembly, may dimerize with another subunit to form a functional transporter. In terms of tissue distribution, highest levels of expression in thymus and spleen. Detected in lung and small intestine.

It localises to the membrane. This Mus musculus (Mouse) protein is ATP-binding cassette sub-family G member 3 (Abcg3).